The following is a 179-amino-acid chain: Large ribosomal subunit protein uL5 (179 aa).

It belongs to the universal ribosomal protein uL5 family. Part of the 50S ribosomal subunit; part of the 5S rRNA/L5/L18/L25 subcomplex. Contacts the 5S rRNA and the P site tRNA. Forms a bridge to the 30S subunit in the 70S ribosome.

Its function is as follows. This is one of the proteins that bind and probably mediate the attachment of the 5S RNA into the large ribosomal subunit, where it forms part of the central protuberance. In the 70S ribosome it contacts protein S13 of the 30S subunit (bridge B1b), connecting the 2 subunits; this bridge is implicated in subunit movement. Contacts the P site tRNA; the 5S rRNA and some of its associated proteins might help stabilize positioning of ribosome-bound tRNAs. In Photobacterium profundum (strain SS9), this protein is Large ribosomal subunit protein uL5.